The following is a 513-amino-acid chain: Carboxyethyl-arginine beta-lactam-synthase (513 aa).

Mg(2+) contacts are provided by aspartate 253 and aspartate 351.

This sequence belongs to the asparagine synthetase family. Homodimer. Mg(2+) is required as a cofactor.

It carries out the reaction N(2)-(2-carboxyethyl)-L-arginine + ATP = deoxyamidinoproclavaminate + AMP + diphosphate + H(+). Its pathway is antibiotic biosynthesis; clavulanate biosynthesis; clavulanate from D-glyceraldehyde 3-phosphate and L-arginine: step 2/8. The protein is Carboxyethyl-arginine beta-lactam-synthase (bls) of Streptomyces clavuligerus.